Here is a 196-residue protein sequence, read N- to C-terminus: Shikimate kinase (196 aa).

Residue 21–26 (GTGKSR) participates in ATP binding. S25 provides a ligand contact to Mg(2+). Residues D43, R67, and G89 each coordinate substrate. R126 provides a ligand contact to ATP. R145 lines the substrate pocket. Residue R161 participates in ATP binding.

Belongs to the shikimate kinase family. In terms of assembly, monomer. The cofactor is Mg(2+).

It localises to the cytoplasm. The catalysed reaction is shikimate + ATP = 3-phosphoshikimate + ADP + H(+). It participates in metabolic intermediate biosynthesis; chorismate biosynthesis; chorismate from D-erythrose 4-phosphate and phosphoenolpyruvate: step 5/7. Its function is as follows. Catalyzes the specific phosphorylation of the 3-hydroxyl group of shikimic acid using ATP as a cosubstrate. The polypeptide is Shikimate kinase (Deinococcus radiodurans (strain ATCC 13939 / DSM 20539 / JCM 16871 / CCUG 27074 / LMG 4051 / NBRC 15346 / NCIMB 9279 / VKM B-1422 / R1)).